The chain runs to 440 residues: Protein EFFECTOR OF TRANSCRIPTION (440 aa).

Residues 131–167 (SIQGLGVAVNIHDADDISHGQTESIRTRLRSYGRPVP) enclose the GIY-YIG domain. Positions 172-216 (LGDNASQTITQKKTGGRSKDKKHGFEEERDVSRVEAEENNTNSVH) are disordered. Positions 175–184 (NASQTITQKK) are enriched in polar residues. Over residues 194–207 (HGFEEERDVSRVEA) the composition is skewed to basic and acidic residues. 2 Cx9Cx9RCx2HK repeats span residues 247-272 (CGVL…TEHK) and 295-320 (CGVI…EDHK). A disordered region spans residues 339 to 363 (ILKEDKSKPKTRTSSTNQEEPGESL). Cx9Cx9RCx2HK repeat units follow at residues 365 to 390 (CEAT…WQHK) and 409 to 434 (CGVK…QEHK).

It is found in the nucleus. Its function is as follows. Transcription regulator that negatively modulates gibberellin-mediated developmental processes. May act as transcriptional repressor of giberellin controlled genes. Binds DNA without sequence preference. This Brassica napus (Rape) protein is Protein EFFECTOR OF TRANSCRIPTION.